We begin with the raw amino-acid sequence, 281 residues long: 3-mercaptopyruvate sulfurtransferase (281 aa).

Rhodanese domains are found at residues 17 to 135 (DDPE…LLEE) and 165 to 278 (HENT…LPVE). Arg-179 contacts substrate. Cys-238 (cysteine persulfide intermediate) is an active-site residue. The segment at 238–244 (CGSGVTA) is substrate specificity.

Its subcellular location is the cytoplasm. It catalyses the reaction 2-oxo-3-sulfanylpropanoate + [thioredoxin]-dithiol = [thioredoxin]-disulfide + hydrogen sulfide + pyruvate + H(+). Functionally, catalyzes the transfer of sulfur from 3-mercaptopyruvate to a thiol-containing acceptor to form an intramolecular disulfide releasing hydrogen sulfide and pyruvate. The protein is 3-mercaptopyruvate sulfurtransferase (sseA) of Escherichia coli O157:H7.